Consider the following 296-residue polypeptide: 5,10-methylenetetrahydrofolate reductase (296 aa).

Catalysis depends on Glu28, which acts as the Proton donor/acceptor. NADH is bound at residue Thr59. Residues Tyr60, Ala62, His88, Arg118, Gly119, Asp120, Ala132, Tyr152, His156, Ala159, Asp165, Asn168, Arg171, and Lys172 each contribute to the FAD site. Position 120 (Asp120) interacts with (6S)-5-methyl-5,6,7,8-tetrahydrofolate. Gln183 contributes to the NADH binding site. Positions 183, 219, and 279 each coordinate (6S)-5-methyl-5,6,7,8-tetrahydrofolate.

This sequence belongs to the methylenetetrahydrofolate reductase family. FAD serves as cofactor.

The enzyme catalyses (6S)-5-methyl-5,6,7,8-tetrahydrofolate + NAD(+) = (6R)-5,10-methylene-5,6,7,8-tetrahydrofolate + NADH + H(+). It participates in one-carbon metabolism; tetrahydrofolate interconversion. Its pathway is amino-acid biosynthesis; L-methionine biosynthesis via de novo pathway. Functionally, catalyzes the NADH-dependent reduction of 5,10-methylenetetrahydrofolate to 5-methyltetrahydrofolate. Is required to provide the methyl group necessary for methionine synthetase to convert homocysteine to methionine; the methyl group is given by 5-methyltetrahydrofolate. In Salmonella typhimurium (strain LT2 / SGSC1412 / ATCC 700720), this protein is 5,10-methylenetetrahydrofolate reductase (metF).